The chain runs to 354 residues: Rhodopsin (354 aa).

The Extracellular segment spans residues 1-36 (MNGTEGPNFYIPMSNKTGVVRSPFDYPQYYLAEPWK). The N-linked (GlcNAc...) (hybrid) asparagine glycan is linked to N2. N-linked (GlcNAc...) asparagine glycosylation occurs at N15. Residues 37 to 61 (YSVLAAYMFLLILLGLPINFMTLYV) traverse the membrane as a helical segment. Topologically, residues 62–73 (TIQHKKLRTPLN) are cytoplasmic. A helical transmembrane segment spans residues 74 to 96 (YILLNLGVCNHFMVLCGFTITMY). The Extracellular segment spans residues 97–110 (TSLHGYFVFGQTGC). The cysteines at positions 110 and 187 are disulfide-linked. Residues 111–133 (YFEGFFATLGGEIALWSLVVLAI) form a helical membrane-spanning segment. Residues 134–136 (ERY) carry the 'Ionic lock' involved in activated form stabilization motif. Residues 134–152 (ERYIVVCKPMSNFRFGENH) lie on the Cytoplasmic side of the membrane. The chain crosses the membrane as a helical span at residues 153 to 173 (AMMGVAFTWIMALACAVPPLF). At 174 to 202 (GWSRYIPEGMQCSCGVDYYTLKPEVNNES) the chain is on the extracellular side. A helical membrane pass occupies residues 203–224 (FVIYMFVVHFLIPLIIISFCYG). Residues 225–252 (RLVCTVKEAAAQQQESATTQKAEKEVTR) lie on the Cytoplasmic side of the membrane. A helical transmembrane segment spans residues 253–274 (MVIIMVIFFLICWVPYAYVAFY). Topologically, residues 275 to 286 (IFTHQGSEFGPI) are extracellular. Residues 287–308 (FMTVPAFFAKSSAIYNPVIYIM) form a helical membrane-spanning segment. K296 bears the N6-(retinylidene)lysine mark. The Cytoplasmic portion of the chain corresponds to 309-354 (LNKQFRNCMITTLCCGKNPFGDDDASSAATSKTEATSVSTSQVSPA). S-palmitoyl cysteine attachment occurs at residues C322 and C323. The disordered stretch occupies residues 332–354 (DASSAATSKTEATSVSTSQVSPA). Positions 334–354 (SSAATSKTEATSVSTSQVSPA) are enriched in low complexity.

This sequence belongs to the G-protein coupled receptor 1 family. Opsin subfamily. In terms of processing, contains one covalently linked retinal chromophore. Upon light absorption, the covalently bound 11-cis-retinal is converted to all-trans-retinal. After hydrolysis of the Schiff base and release of the covalently bound all-trans-retinal, active rhodopsin is regenerated by binding of a fresh molecule of 11-cis-retinal. Detected in retina rod photoreceptor cell outer segments (at protein level). Detected in retina.

The protein resides in the membrane. It localises to the cell projection. It is found in the cilium. The protein localises to the photoreceptor outer segment. Photoreceptor required for image-forming vision at low light intensity. Required for photoreceptor cell viability after birth. Light-induced isomerization of 11-cis to all-trans retinal triggers a conformational change that activates signaling via G-proteins. Subsequent receptor phosphorylation mediates displacement of the bound G-protein alpha subunit by arrestin and terminates signaling. This is Rhodopsin (RHO) from Lithobates pipiens (Northern leopard frog).